The sequence spans 398 residues: Bone morphogenetic protein 2-A (398 aa).

Positions 1–23 are cleaved as a signal peptide; that stretch reads MVAGIHSLLLLLFYQVLLSGCTG. A propeptide spanning residues 24–284 is cleaved from the precursor; it reads LIPEEGKRKY…GHALHKRQKR (261 aa). N-linked (GlcNAc...) asparagine glycans are attached at residues N137, N202, and N340. 3 disulfides stabilise this stretch: C298–C363, C327–C395, and C331–C397.

Belongs to the TGF-beta family. In terms of assembly, homodimer; disulfide-linked.

It is found in the secreted. Functionally, induces cartilage and bone formation. The sequence is that of Bone morphogenetic protein 2-A (bmp2-a) from Xenopus laevis (African clawed frog).